A 226-amino-acid chain; its full sequence is MDILIISLKSLGYSRTARPLDSSPLVVHAVAGAGKSTALRKLLARHSTFTVHTLGVPDKISIRTRGIQKPGPIPEGNFAILDEYTLDATTREAYQALFADPYQAPELSLEPHFYLETSFRTPTKAAALIASCGFDFETNSQEEGHLEITGIFKGPLLGKVIAIDSEAETTLSRHGVEFVKPCQVTGLEFPVVTIVSAAPIEEIGQSTLFYNAITRSKGLTYVRAGA.

The 138-residue stretch at 1–138 folds into the (+)RNA virus helicase ATP-binding domain; the sequence is MDILIISLKS…IASCGFDFET (138 aa). Positions 139–226 constitute a (+)RNA virus helicase C-terminal domain; the sequence is NSQEEGHLEI…KGLTYVRAGA (88 aa).

This sequence belongs to the Tymovirales TGBp1 protein family. Homodimer and homooligomer. Interacts with capsid protein. Interacts with host AGO1; this interaction targets the host protein for degradation, thereby suppressing the antiviral RNA silencing.

It is found in the host cytoplasm. Transports viral genome to neighboring plant cells directly through plasmosdesmata, without any budding. The movement protein allows efficient cell to cell propagation, by bypassing the host cell wall barrier. Increases plasmodesma size exclusion limit. Acts as a suppressor of RNA-mediated gene silencing, also known as post-transcriptional gene silencing (PTGS), a mechanism of plant viral defense that limits the accumulation of viral RNAs. This chain is Movement and silencing protein TGBp1, found in Brassica campestris (Field mustard).